Reading from the N-terminus, the 201-residue chain is Peptidyl-prolyl cis-trans isomerase FKBP11 (201 aa).

Positions 1 to 27 (MTLRPSLLPLHLLLLLLLSAAVCRAEA) are cleaved as a signal peptide. One can recognise a PPIase FKBP-type domain in the interval 57-144 (GDTLHIHYTG…QYDVELIALI (88 aa)). The chain crosses the membrane as a helical span at residues 156–176 (ILPLVGMAMVPALLGLIGYHL).

The protein belongs to the FKBP-type PPIase family. As to quaternary structure, interacts with IFITM5.

The protein localises to the membrane. The enzyme catalyses [protein]-peptidylproline (omega=180) = [protein]-peptidylproline (omega=0). In terms of biological role, PPIases accelerate the folding of proteins during protein synthesis. The sequence is that of Peptidyl-prolyl cis-trans isomerase FKBP11 (FKBP11) from Homo sapiens (Human).